A 366-amino-acid polypeptide reads, in one-letter code: NADH-quinone oxidoreductase subunit D (366 aa).

Belongs to the complex I 49 kDa subunit family. NDH-1 is composed of 14 different subunits. Subunits NuoB, C, D, E, F, and G constitute the peripheral sector of the complex.

Its subcellular location is the cell membrane. The enzyme catalyses a quinone + NADH + 5 H(+)(in) = a quinol + NAD(+) + 4 H(+)(out). Functionally, NDH-1 shuttles electrons from NADH, via FMN and iron-sulfur (Fe-S) centers, to quinones in the respiratory chain. The immediate electron acceptor for the enzyme in this species is believed to be a menaquinone. Couples the redox reaction to proton translocation (for every two electrons transferred, four hydrogen ions are translocated across the cytoplasmic membrane), and thus conserves the redox energy in a proton gradient. The protein is NADH-quinone oxidoreductase subunit D of Bacillus cereus (strain ATCC 10987 / NRS 248).